We begin with the raw amino-acid sequence, 133 residues long: Nucleoside diphosphate kinase (133 aa).

The ATP site is built by Lys-9, Phe-57, Arg-85, Thr-91, Arg-102, and Asn-112. His-115 acts as the Pros-phosphohistidine intermediate in catalysis.

Belongs to the NDK family. Requires Mg(2+) as cofactor.

It localises to the cytoplasm. It catalyses the reaction a 2'-deoxyribonucleoside 5'-diphosphate + ATP = a 2'-deoxyribonucleoside 5'-triphosphate + ADP. The enzyme catalyses a ribonucleoside 5'-diphosphate + ATP = a ribonucleoside 5'-triphosphate + ADP. Functionally, major role in the synthesis of nucleoside triphosphates other than ATP. The ATP gamma phosphate is transferred to the NDP beta phosphate via a ping-pong mechanism, using a phosphorylated active-site intermediate. The chain is Nucleoside diphosphate kinase from Methanococcus maripaludis (strain DSM 14266 / JCM 13030 / NBRC 101832 / S2 / LL).